An 80-amino-acid chain; its full sequence is UPF0291 protein llmg_1475 (80 aa).

This sequence belongs to the UPF0291 family.

It is found in the cytoplasm. This chain is UPF0291 protein llmg_1475, found in Lactococcus lactis subsp. cremoris (strain MG1363).